We begin with the raw amino-acid sequence, 302 residues long: MEQNNSLPPFAQGLASPQGAMTPGLPIFSPMMPYGTGLTPQPVQNSNSLSLLEEQQRQQQQQQAASQQQGGMVGGSGQTPQLYHSTQAVSTTTALPGNTPLYTTPLTPMTPITPATPASESSGIVPQLQNIVSTVNLGCKLDLKTIALRARNAEYNPKRFAAVIMRIREPRTTALIFSSGKMVCTGAKSEEQSRLAARKYARVVQKLGFPAKFLDFKIQNMVGSCDVKFPIRLEGLVLTHQQFSSYEPELFPGLIYRMIKPRIVLLIFVSGKVVLTGAKVRGEIYEAFENIYPILKGFRKTS.

Disordered regions lie at residues 1-22 (MEQN…GAMT) and 50-81 (SLLE…QTPQ). A compositionally biased stretch (low complexity) spans 50–70 (SLLEEQQRQQQQQQAASQQQG). 2 consecutive repeat copies span residues 128-204 (LQNI…ARVV) and 218-295 (IQNM…YPIL).

This sequence belongs to the TBP family. As to expression, enriched in testis but hardly detectable in the ovary (at protein level).

It is found in the nucleus. General transcription factor that functions at the core of the DNA-binding multiprotein factor TFIID. Binding of TFIID to the TATA box is the initial transcriptional step of the pre-initiation complex (PIC), playing a role in the activation of eukaryotic genes transcribed by RNA polymerase II. Members of the TBP family are differentially required for transcription and development during early embryogenesis. Regulates mRNA levels in the early embryo by both transcriptional and post-transcriptional mechanisms. Required for transcription of a subset of genes at the mid-blastula transition (MBT). Negatively regulates the expression of other embryonic genes, including autoregulation of the tbp promoter itself. Also functions within a transcription-dependent mechanism to direct the temporally-regulated degradation of a subset of maternal mRNAs after the MBT. This is part of a general mechanism to regulate the maternal to zygotic transition and is required for normal embryonic development. Binds to promoters of a subset of genes. Required for gastrulation. This is TATA-box-binding protein from Danio rerio (Zebrafish).